Reading from the N-terminus, the 352-residue chain is Mitochondrial ubiquitin ligase activator of NFKB 1 (352 aa).

Residues 1–8 (MENGGRPS) lie on the Cytoplasmic side of the membrane. Residues 9–29 (LCQFILLGTTSVVTAALYSVY) form a helical membrane-spanning segment. Residues 30 to 238 (RQKAWVSQEL…LLQRQESSVR (209 aa)) are Mitochondrial intermembrane-facing. Residue lysine 52 forms a Glycyl lysine isopeptide (Lys-Gly) (interchain with G-Cter in ubiquitin) linkage. Residues 239 to 259 (LWKVLALVFGFATCATLFFIL) traverse the membrane as a helical segment. The Cytoplasmic portion of the chain corresponds to 260 to 352 (RKQYLQRQER…ITRVIPLYNS (93 aa)). Glycyl lysine isopeptide (Lys-Gly) (interchain with G-Cter in ubiquitin) cross-links involve residues lysine 273 and lysine 299. An RING-type zinc finger spans residues 302 to 340 (CVVCLSSFKSCVFLECGHVCSCTECYRALPEPKKCPICR).

Homooligomer. Interacts with MAP3K7/TAK1. Interacts with UBC9. Interacts with and sumoylates DNM1L. Interacts with MAVS. Interacts with TP53 (via N-terminus); the interaction leads to ubiquitination and proteasomal degradation of TP53. In terms of processing, ubiquitinated by PRKN during mitophagy, leading to its degradation and enhancement of mitophagy. Deubiquitinated by USP30.

Its subcellular location is the mitochondrion outer membrane. It localises to the peroxisome. The catalysed reaction is S-ubiquitinyl-[E2 ubiquitin-conjugating enzyme]-L-cysteine + [acceptor protein]-L-lysine = [E2 ubiquitin-conjugating enzyme]-L-cysteine + N(6)-ubiquitinyl-[acceptor protein]-L-lysine.. Its pathway is protein modification; protein ubiquitination. It participates in protein modification; protein sumoylation. Exhibits weak E3 ubiquitin-protein ligase activity. E3 ubiquitin ligases accept ubiquitin from an E2 ubiquitin-conjugating enzyme in the form of a thioester and then directly transfer the ubiquitin to targeted substrates. Can ubiquitinate AKT1 preferentially at 'Lys-284' involving 'Lys-48'-linked polyubiquitination and seems to be involved in regulation of Akt signaling by targeting phosphorylated Akt to proteasomal degradation. Mediates polyubiquitination of cytoplasmic TP53 at 'Lys-24' which targets TP53 for proteasomal degradation, thus reducing TP53 levels in the cytoplasm and mitochondrion. Proposed to preferentially act as a SUMO E3 ligase at physiological concentrations. Plays a role in the control of mitochondrial morphology by promoting mitochondrial fragmentation, and influences mitochondrial localization. Likely to promote mitochondrial fission through negatively regulating the mitochondrial fusion proteins MFN1 and MFN2, acting in a pathway that is parallel to the PRKN/PINK1 regulatory pathway. May also be involved in the sumoylation of the membrane fission protein DNM1L. Inhibits cell growth. When overexpressed, activates JNK through MAP3K7/TAK1 and induces caspase-dependent apoptosis. Involved in the modulation of innate immune defense against viruses by inhibiting RIGI-dependent antiviral response. Can mediate RIGI sumoylation and disrupt its polyubiquitination. This chain is Mitochondrial ubiquitin ligase activator of NFKB 1 (MUL1), found in Macaca fascicularis (Crab-eating macaque).